We begin with the raw amino-acid sequence, 320 residues long: Methylenetetrahydrofolate dehydrogenase [NAD(+)] (320 aa).

Cys150 is an active-site residue. NAD(+)-binding positions include 185-186 (RS), 208-209 (DV), and 274-276 (FAC).

It belongs to the tetrahydrofolate dehydrogenase/cyclohydrolase family. As to quaternary structure, homodimer. The N-terminus is blocked.

Its subcellular location is the cytoplasm. The protein resides in the nucleus. It catalyses the reaction (6R)-5,10-methylene-5,6,7,8-tetrahydrofolate + NAD(+) = (6R)-5,10-methenyltetrahydrofolate + NADH. Its function is as follows. Catalyzes oxidation of cytoplasmic one-carbon units for purine biosynthesis. The sequence is that of Methylenetetrahydrofolate dehydrogenase [NAD(+)] (MTD1) from Saccharomyces cerevisiae (strain ATCC 204508 / S288c) (Baker's yeast).